The primary structure comprises 303 residues: MTLTAPPRLLLVHAHPDDETLWTGGTIARYAARGVQVVVVTCTLGEEGEVIPDNLRGLAADQADQLGGYRVGELRSACAALRVADQRFLGGVGRWRDSGMLWEKPGQASALPDAHPRAFAVGDADEQADALEELLREFRPQVVVTYAADGGYGHPDHIRAHEVTMAAAAKVPDVLRVFHAVPSQGVVKEGLAALAEAEGMPFELPEPHELPGVPDERITTVVDVGEHLPAKISALRAHGTQVKMWLEQWNNGAGVAAYALSNGVAQPVVNTEHYVLATGDQQGCETDLFGGLGVSGTEPVGAR.

3 residues coordinate Zn(2+): His15, Asp18, and His157.

Belongs to the MshB deacetylase family. The cofactor is Zn(2+).

The enzyme catalyses 1D-myo-inositol 2-acetamido-2-deoxy-alpha-D-glucopyranoside + H2O = 1D-myo-inositol 2-amino-2-deoxy-alpha-D-glucopyranoside + acetate. Its function is as follows. Catalyzes the deacetylation of 1D-myo-inositol 2-acetamido-2-deoxy-alpha-D-glucopyranoside (GlcNAc-Ins) in the mycothiol biosynthesis pathway. This is 1D-myo-inositol 2-acetamido-2-deoxy-alpha-D-glucopyranoside deacetylase 1 from Saccharopolyspora erythraea (strain ATCC 11635 / DSM 40517 / JCM 4748 / NBRC 13426 / NCIMB 8594 / NRRL 2338).